The primary structure comprises 624 residues: Chaperone protein HtpG (624 aa).

The interval 1-336 (MKGQETRGFQ…SSDLPLNVSR (336 aa)) is a; substrate-binding. The b stretch occupies residues 337 to 552 (EILQDSTVTR…ADEMSTQMAK (216 aa)). The tract at residues 553–624 (LFAAAGQKVP…IRRMNQLLVS (72 aa)) is c.

The protein belongs to the heat shock protein 90 family. Homodimer.

Its subcellular location is the cytoplasm. Its function is as follows. Molecular chaperone. Has ATPase activity. The polypeptide is Chaperone protein HtpG (Escherichia coli O1:K1 / APEC).